A 557-amino-acid polypeptide reads, in one-letter code: MMVVLLGATTLVLVAVAPWVLSAAAGGKNLKSPQKVEVDIIDDNFILRWNRSDESVGNVTFSFDYQKTGMDNWIKLSGCQNITSTKCNFSSLKLNVYEEIKLRIRAEKENTSSWYEVDSFTPFRKAQIGPPEVHLEAEDKAIVIHISPGTKDSVMWALDGLSFTYSLVIWKNSSGVEERIENIYSRHKIYKLSPETTYCLKVKAALLTSWKIGVYSPVHCIKTTVENELPPPENIEVSVQNQNYVLKWDYTYANMTFQVQWLHAFLKRNPGNHLYKWKQIPDCENVKTTQCVFPQNVFQKGIYLLRVQASDGNNTSFWSEEIKFDTEIQAFLLPPVFNIRSLSDSFHIYIGAPKQSGNTPVIQDYPLIYEIIFWENTSNAERKIIEKKTDVTVPNLKPLTVYCVKARAHTMDEKLNKSSVFSDAVCEKTKPGNTSKIWLIVGICIALFALPFVIYAAKVFLRCINYVFFPSLKPSSSIDEYFSEQPLKNLLLSTSEEQIEKCFIIENISTIATVEETNQTDEDHKKYSSQTSQDSGNYSNEDESESKTSEELQQDFV.

An N-terminal signal peptide occupies residues 1 to 27; sequence MMVVLLGATTLVLVAVAPWVLSAAAGG. Over 28 to 436 the chain is Extracellular; the sequence is KNLKSPQKVE…EKTKPGNTSK (409 aa). 4 Fibronectin type-III domains span residues 32 to 126, 127 to 227, 231 to 329, and 331 to 432; these read SPQK…FRKA, QIGP…TVEN, PPEN…TEIQ, and FLLP…TKPG. N-linked (GlcNAc...) asparagine glycosylation is found at Asn50, Asn58, Asn81, Asn88, Asn110, and Asn172. The cysteines at positions 79 and 87 are disulfide-linked. Cys199 and Cys220 are joined by a disulfide. The N-linked (GlcNAc...) asparagine glycan is linked to Asn254. Cys283 and Cys291 are disulfide-bonded. 5 N-linked (GlcNAc...) asparagine glycosylation sites follow: Asn313, Asn314, Asn376, Asn416, and Asn433. A disulfide bridge links Cys403 with Cys426. A helical membrane pass occupies residues 437–457; that stretch reads IWLIVGICIALFALPFVIYAA. The Cytoplasmic segment spans residues 458–557; sequence KVFLRCINYV…TSEELQQDFV (100 aa). Cys463 is lipidated: S-palmitoyl cysteine. Phosphotyrosine; by TYK2 occurs at positions 466 and 481. The tract at residues 491 to 500 is important for interaction with TYK2; that stretch reads LLSTSEEQIE. Ser495 carries the phosphoserine modification. Glycyl lysine isopeptide (Lys-Gly) (interchain with G-Cter in ubiquitin) cross-links involve residues Lys501, Lys525, and Lys526. The interval 516 to 557 is disordered; that stretch reads ETNQTDEDHKKYSSQTSQDSGNYSNEDESESKTSEELQQDFV. Residues 528–539 are compositionally biased toward polar residues; that stretch reads SSQTSQDSGNYS. At Ser535 the chain carries Phosphoserine.

Belongs to the type II cytokine receptor family. Heterodimer with IFNAR2; forming the receptor for type I interferon. Interacts with TYK2. Interacts with STAT1 and STAT2; the interaction requires its phosphorylation at Tyr-466. Interacts (serine-phosphorylated form) with FBXW11, the substrate recognition component of a SCF (SKP1-CUL1-F-box protein) E3 ubiquitin-protein ligase complex. Interacts with SHMT2; this promotes interaction with ABRAXAS2 and the BRISC complex. Interacts with TRIM10; this interaction prevents association between IFNAR1 and TYK2. Ubiquitinated, leading to its internalization and degradation. Polyubiquitinated via 'Lys-48'-linked and 'Lys-63'-linked ubiquitin chains, leading to receptor internalization and lysosomal degradation. The 'Lys-63'-linked ubiquitin chains are cleaved off by the BRISC complex. Post-translationally, phosphorylated on tyrosine residues in response to interferon-binding: phosphorylation by TYK2 tyrosine kinase creates docking sites for STAT proteins. Phosphorylated on serine residues in response to interferon binding; this promotes interaction with FBXW11 and ubiquitination. In terms of processing, palmitoylation at Cys-463 is required for the activation of STAT1 and STAT2. IFN receptors are present in all tissues and even on the surface of most IFN-resistant cells. Isoform 1, isoform 2 and isoform 3 are expressed in the IFN-alpha sensitive myeloma cell line U266B1. Isoform 2 and isoform 3 are expressed in the IFN-alpha resistant myeloma cell line U266R. Isoform 1 is not expressed in IFN-alpha resistant myeloma cell line U266R.

The protein localises to the cell membrane. It localises to the late endosome. The protein resides in the lysosome. Its function is as follows. Together with IFNAR2, forms the heterodimeric receptor for type I interferons (including interferons alpha, beta, epsilon, omega and kappa). Type I interferon binding activates the JAK-STAT signaling cascade, resulting in transcriptional activation or repression of interferon-regulated genes that encode the effectors of the interferon response. Mechanistically, type I interferon-binding brings the IFNAR1 and IFNAR2 subunits into close proximity with one another, driving their associated Janus kinases (JAKs) (TYK2 bound to IFNAR1 and JAK1 bound to IFNAR2) to cross-phosphorylate one another. The activated kinases phosphorylate specific tyrosine residues on the intracellular domains of IFNAR1 and IFNAR2, forming docking sites for the STAT transcription factors. STAT proteins are then phosphorylated by the JAKs, promoting their translocation into the nucleus to regulate expression of interferon-regulated genes. Can also act independently of IFNAR2: form an active IFNB1 receptor by itself and activate a signaling cascade that does not involve activation of the JAK-STAT pathway. In Homo sapiens (Human), this protein is Interferon alpha/beta receptor 1 (IFNAR1).